We begin with the raw amino-acid sequence, 280 residues long: 2,3,4,5-tetrahydropyridine-2,6-dicarboxylate N-succinyltransferase (280 aa).

2 residues coordinate substrate: arginine 107 and aspartate 144.

This sequence belongs to the transferase hexapeptide repeat family. In terms of assembly, homotrimer.

The protein localises to the cytoplasm. It catalyses the reaction (S)-2,3,4,5-tetrahydrodipicolinate + succinyl-CoA + H2O = (S)-2-succinylamino-6-oxoheptanedioate + CoA. The protein operates within amino-acid biosynthesis; L-lysine biosynthesis via DAP pathway; LL-2,6-diaminopimelate from (S)-tetrahydrodipicolinate (succinylase route): step 1/3. The protein is 2,3,4,5-tetrahydropyridine-2,6-dicarboxylate N-succinyltransferase of Granulibacter bethesdensis (strain ATCC BAA-1260 / CGDNIH1).